We begin with the raw amino-acid sequence, 532 residues long: Probable alpha-galactosidase A (532 aa).

Positions 1-21 (MDTTKSLLSTLIAIMIPLSLG) are cleaved as a signal peptide. Cys44 and Cys76 are disulfide-bonded. N-linked (GlcNAc...) asparagine glycosylation is found at Asn47, Asn91, and Asn121. Cysteines 124 and 154 form a disulfide. The Nucleophile role is filled by Asp152. N-linked (GlcNAc...) asparagine glycosylation is present at Asn201. Asp210 acts as the Proton donor in catalysis. Residues 410 to 531 (CSTVIPTGIV…GLPSGVDIKP (122 aa)) enclose the Ricin B-type lectin domain. 2 disulfide bridges follow: Cys427-Cys441 and Cys466-Cys478.

Belongs to the glycosyl hydrolase 27 family.

Its subcellular location is the secreted. It catalyses the reaction Hydrolysis of terminal, non-reducing alpha-D-galactose residues in alpha-D-galactosides, including galactose oligosaccharides, galactomannans and galactolipids.. In terms of biological role, hydrolyzes a variety of simple alpha-D-galactoside as well as more complex molecules such as oligosaccharides and polysaccharides. This chain is Probable alpha-galactosidase A (aglA), found in Aspergillus fumigatus (strain ATCC MYA-4609 / CBS 101355 / FGSC A1100 / Af293) (Neosartorya fumigata).